A 112-amino-acid polypeptide reads, in one-letter code: MARLTAYERRKFRVRNRIKRTGRLRLSVFRSLKHIYAQIIDDEKGVTLVSASSLALKLKGNKTEVARQVGRALAEKALALGIKQVAFDRGPYKYHGRVKALAEGAREGGLEF.

The protein belongs to the universal ribosomal protein uL18 family. In terms of assembly, part of the 50S ribosomal subunit; part of the 5S rRNA/L5/L18/L25 subcomplex. Contacts the 5S and 23S rRNAs.

This is one of the proteins that bind and probably mediate the attachment of the 5S RNA into the large ribosomal subunit, where it forms part of the central protuberance. This chain is Large ribosomal subunit protein uL18, found in Thermus thermophilus (strain ATCC BAA-163 / DSM 7039 / HB27).